We begin with the raw amino-acid sequence, 104 residues long: MSTYAIIKTGGKQVKVEVGQAIYVEKLNVEAGQDVTFDEVVLVGGEKTVVGTPLVAGATVVGTVEKQGKQKKVVTFKYKPKKGSHRKQGHRQPYTKVVINAINA.

It belongs to the bacterial ribosomal protein bL21 family. As to quaternary structure, part of the 50S ribosomal subunit. Contacts protein L20.

Its function is as follows. This protein binds to 23S rRNA in the presence of protein L20. The protein is Large ribosomal subunit protein bL21 of Streptococcus gordonii (strain Challis / ATCC 35105 / BCRC 15272 / CH1 / DL1 / V288).